Reading from the N-terminus, the 86-residue chain is Large ribosomal subunit protein bL27 (86 aa).

It belongs to the bacterial ribosomal protein bL27 family.

The chain is Large ribosomal subunit protein bL27 from Cupriavidus metallidurans (strain ATCC 43123 / DSM 2839 / NBRC 102507 / CH34) (Ralstonia metallidurans).